The sequence spans 162 residues: Interleukin-15 (162 aa).

Positions 1–29 (MRISKPHLRITSIQCYVCLLLNTHFLTEA) are cleaved as a signal peptide. The propeptide occupies 30-48 (GIRVFILGCISAGIPKTEA). Intrachain disulfides connect cysteine 83–cysteine 133 and cysteine 90–cysteine 136. Residues asparagine 119, asparagine 127, and asparagine 143 are each glycosylated (N-linked (GlcNAc...) asparagine).

The protein belongs to the IL-15/IL-21 family.

It is found in the secreted. In terms of biological role, cytokine that plays a major role in the development of inflammatory and protective immune responses to microbial invaders and parasites by modulating immune cells of both the innate and adaptive immune systems. Stimulates the proliferation of natural killer cells, T-cells and B-cells and promotes the secretion of several cytokines. In monocytes, induces the production of IL8 and monocyte chemotactic protein 1/CCL2, two chemokines that attract neutrophils and monocytes respectively to sites of infection. Unlike most cytokines, which are secreted in soluble form, IL15 is expressed in association with its high affinity IL15RA on the surface of IL15-producing cells and delivers signals to target cells that express IL2RB and IL2RG receptor subunits. Binding to its receptor triggers the phosphorylation of JAK1 and JAK3 and the recruitment and subsequent phosphorylation of signal transducer and activator of transcription-3/STAT3 and STAT5. In mast cells, induces the rapid tyrosine phosphorylation of STAT6 and thereby controls mast cell survival and release of cytokines such as IL4. The polypeptide is Interleukin-15 (IL15) (Marmota himalayana (Himalayan marmot)).